The primary structure comprises 458 residues: Cell division protein FtsZ (458 aa).

Residues 22-26 (GAGGN), 109-111 (GTG), Glu140, Arg144, and Asp188 each bind GTP. The segment at 319–458 (KAEEEASKQP…IPFFKHRRQD (140 aa)) is disordered. Polar residues predominate over residues 368–379 (NTISHEAPTQSI). Over residues 401-418 (KQDRKENNRPQPVENKEK) the composition is skewed to basic and acidic residues. A compositionally biased stretch (low complexity) spans 425–439 (SFSSDDSTSISQIET).

It belongs to the FtsZ family. Homodimer. Polymerizes to form a dynamic ring structure in a strictly GTP-dependent manner. Interacts directly with several other division proteins.

Its subcellular location is the cytoplasm. In terms of biological role, essential cell division protein that forms a contractile ring structure (Z ring) at the future cell division site. The regulation of the ring assembly controls the timing and the location of cell division. One of the functions of the FtsZ ring is to recruit other cell division proteins to the septum to produce a new cell wall between the dividing cells. Binds GTP and shows GTPase activity. This is Cell division protein FtsZ from Lactobacillus johnsonii (strain CNCM I-12250 / La1 / NCC 533).